The following is a 466-amino-acid chain: Glucose-6-phosphate 1-dehydrogenase 1 (466 aa).

Residues Ser-48, 88 to 89 (DV), and Lys-141 each bind NADP(+). Substrate is bound by residues His-171, Lys-175, Glu-209, and Asp-228. The active-site Proton acceptor is the His-233. The substrate site is built by Lys-319 and Lys-324.

The protein belongs to the glucose-6-phosphate dehydrogenase family.

It catalyses the reaction D-glucose 6-phosphate + NADP(+) = 6-phospho-D-glucono-1,5-lactone + NADPH + H(+). It participates in carbohydrate degradation; pentose phosphate pathway; D-ribulose 5-phosphate from D-glucose 6-phosphate (oxidative stage): step 1/3. Functionally, catalyzes the oxidation of glucose 6-phosphate to 6-phosphogluconolactone. In Mycobacterium tuberculosis (strain ATCC 25618 / H37Rv), this protein is Glucose-6-phosphate 1-dehydrogenase 1.